A 147-amino-acid polypeptide reads, in one-letter code: UPF0251 protein CTC_01373 (147 aa).

The protein belongs to the UPF0251 family.

The polypeptide is UPF0251 protein CTC_01373 (Clostridium tetani (strain Massachusetts / E88)).